We begin with the raw amino-acid sequence, 261 residues long: Sulfur carrier protein FdhD (261 aa).

Cysteine 105 (cysteine persulfide intermediate) is an active-site residue. 245–250 (FIRGDR) provides a ligand contact to Mo-bis(molybdopterin guanine dinucleotide).

It belongs to the FdhD family.

The protein localises to the cytoplasm. Functionally, required for formate dehydrogenase (FDH) activity. Acts as a sulfur carrier protein that transfers sulfur from IscS to the molybdenum cofactor prior to its insertion into FDH. This is Sulfur carrier protein FdhD from Listeria innocua serovar 6a (strain ATCC BAA-680 / CLIP 11262).